Consider the following 595-residue polypeptide: Tectonic-3 (595 aa).

Positions 1–22 are cleaved as a signal peptide; the sequence is MCTLQLHLLLLVVLMLSETARP. The disordered stretch occupies residues 23 to 62; it reads QPSSTARAFPTSWGLEPVTPEVPTSAPPDSSESPTPWTLS. At 23–575 the chain is on the extracellular side; that stretch reads QPSSTARAFP…ALSRGASVQK (553 aa). A compositionally biased stretch (polar residues) spans 49-62; that stretch reads PPDSSESPTPWTLS. Residues asparagine 167 and asparagine 336 are each glycosylated (N-linked (GlcNAc...) asparagine). Residues 576 to 594 form a helical membrane-spanning segment; sequence DSLVLILCVLLLGLLNSQT. Residue lysine 595 is a topological domain, cytoplasmic.

This sequence belongs to the tectonic family. In terms of assembly, part of the tectonic-like complex (also named B9 complex).

It localises to the membrane. In terms of biological role, part of the tectonic-like complex which is required for tissue-specific ciliogenesis and may regulate ciliary membrane composition. May be involved in apoptosis regulation. Necessary for signal transduction through the sonic hedgehog (Shh) signaling pathway. The sequence is that of Tectonic-3 (Tctn3) from Mus musculus (Mouse).